The chain runs to 68 residues: Tabimmunregulin 12 (68 aa).

Residues 1 to 24 form the signal peptide; the sequence is MLFKSYVYFLAGLLLVGLFTSCDA. Residues 25–38 constitute a propeptide that is removed on maturation; sequence DAQYEELVPGFFRK.

In terms of tissue distribution, expressed in salivary glands.

Its subcellular location is the secreted. Its function is as follows. Horsefly salivary gland immunosuppressant protein that likely inhibits the host inflammatory response by regulation of anti- and pro-inflammatory cytokines. When tested on mouse splenocytes in the presence of LPS, it increases the secretion of the proinflammatory cytokine interleukin-10 (IL10) and decreases the secretion of the proinflammatory cytokine interferon-gamma (IFNG) in a dose-dependent manner. This Tabanus yao (Horsefly) protein is Tabimmunregulin 12.